Consider the following 265-residue polypeptide: Orphan methyltransferase M.BamHII (265 aa).

The protein belongs to the N(4)/N(6)-methyltransferase family. N(4) subfamily.

It carries out the reaction a 2'-deoxycytidine in DNA + S-adenosyl-L-methionine = an N(4)-methyl-2'-deoxycytidine in DNA + S-adenosyl-L-homocysteine + H(+). In terms of biological role, a beta subtype methylase, recognizes the double-stranded sequence 5'-GGATCC-3', methylates C-? on both strands. No endonuclease has been identified for this methylase, although it is speculated it might protect against BamHI. The sequence is that of Orphan methyltransferase M.BamHII (bamHIIM) from Bacillus amyloliquefaciens (Bacillus velezensis).